The sequence spans 479 residues: Ribosomal protein uS12 methylthiotransferase RimO (479 aa).

Positions 1–34 (MTVNTFDPSKASPVTHASDSASKTPEPNAVAAPS) are disordered. Over residues 15 to 25 (THASDSASKTP) the composition is skewed to polar residues. One can recognise an MTTase N-terminal domain in the interval 39–151 (NRVGFVSLGC…VMGAVHGYIP (113 aa)). 6 residues coordinate [4Fe-4S] cluster: Cys48, Cys84, Cys113, Cys184, Cys188, and Cys191. One can recognise a Radical SAM core domain in the interval 170–407 (LTPRHYAYLK…METQQAISAA (238 aa)). Residues 410-476 (KQKVGYEMDV…DYDLTGIAVE (67 aa)) enclose the TRAM domain.

It belongs to the methylthiotransferase family. RimO subfamily. It depends on [4Fe-4S] cluster as a cofactor.

The protein resides in the cytoplasm. It catalyses the reaction L-aspartate(89)-[ribosomal protein uS12]-hydrogen + (sulfur carrier)-SH + AH2 + 2 S-adenosyl-L-methionine = 3-methylsulfanyl-L-aspartate(89)-[ribosomal protein uS12]-hydrogen + (sulfur carrier)-H + 5'-deoxyadenosine + L-methionine + A + S-adenosyl-L-homocysteine + 2 H(+). Functionally, catalyzes the methylthiolation of an aspartic acid residue of ribosomal protein uS12. The sequence is that of Ribosomal protein uS12 methylthiotransferase RimO from Saccharophagus degradans (strain 2-40 / ATCC 43961 / DSM 17024).